The following is a 362-amino-acid chain: Meiotic recombination protein SPO11-1 (362 aa).

The 135-residue stretch at 8-142 (SESTNLLQRI…LNVVSVGNGL (135 aa)) folds into the Topo IIA-type catalytic domain. Catalysis depends on tyrosine 103, which acts as the O-(5'-phospho-DNA)-tyrosine intermediate. Positions 189 and 241 each coordinate Mg(2+).

This sequence belongs to the TOP6A family. As to quaternary structure, heterotetramer of 2 SPO11 (SPO11-1 and/or SPO11-2) and 2 MTOPVIB chains. Interacts with MTOPVIB. May form a heterodimer with SPO11-2. Interacts with PRD1. Does not interact with TOP6B. It depends on Mg(2+) as a cofactor. As to expression, expressed in shoots, young seedlings, flowers and reproductive tissues. Not found in roots or rosette leaves.

It localises to the nucleus. It carries out the reaction ATP-dependent breakage, passage and rejoining of double-stranded DNA.. Functionally, component of a topoisomerase 6 complex specifically required for meiotic recombination. Together with MTOPVIB, mediates DNA cleavage that forms the double-strand breaks (DSB) that initiate meiotic recombination. The complex promotes relaxation of negative and positive supercoiled DNA and DNA decatenation through cleavage and ligation cycles. This chain is Meiotic recombination protein SPO11-1, found in Arabidopsis thaliana (Mouse-ear cress).